The chain runs to 147 residues: Large ribosomal subunit protein bL9 (147 aa).

This sequence belongs to the bacterial ribosomal protein bL9 family.

In terms of biological role, binds to the 23S rRNA. This is Large ribosomal subunit protein bL9 from Clostridium novyi (strain NT).